Consider the following 286-residue polypeptide: Shikimate dehydrogenase (NADP(+)) (286 aa).

Shikimate-binding positions include 20 to 22 (SLS) and Ser-67. Catalysis depends on Lys-71, which acts as the Proton acceptor. Shikimate is bound by residues Asn-92 and Asp-107. Residues 131-135 (GGGGA) and Ala-230 each bind NADP(+). Position 232 (Tyr-232) interacts with shikimate. Gly-253 contacts NADP(+).

The protein belongs to the shikimate dehydrogenase family. Homodimer.

It catalyses the reaction shikimate + NADP(+) = 3-dehydroshikimate + NADPH + H(+). It functions in the pathway metabolic intermediate biosynthesis; chorismate biosynthesis; chorismate from D-erythrose 4-phosphate and phosphoenolpyruvate: step 4/7. Functionally, involved in the biosynthesis of the chorismate, which leads to the biosynthesis of aromatic amino acids. Catalyzes the reversible NADPH linked reduction of 3-dehydroshikimate (DHSA) to yield shikimate (SA). The chain is Shikimate dehydrogenase (NADP(+)) from Lactococcus lactis subsp. cremoris (strain MG1363).